The chain runs to 237 residues: Bax inhibitor 1 (237 aa).

The Cytoplasmic portion of the chain corresponds to 1–29 (MNIFDRKINFDALLKFSHITPSTQQHLKK). Lys7 participates in a covalent cross-link: Glycyl lysine isopeptide (Lys-Gly) (interchain with G-Cter in ubiquitin). Residues 30–50 (VYASFALCMFVAAAGAYVHVV) traverse the membrane as a helical segment. Residues 51–52 (TR) are Lumenal-facing. The helical transmembrane segment at 53-73 (FIQAGLLSALGSLGLMIWLMA) threads the bilayer. Over 74–86 (TPHSHETEQKRLG) the chain is Cytoplasmic. A helical membrane pass occupies residues 87 to 107 (LLAGFAFLTGVGLGPALDLCI). The Lumenal segment spans residues 108–112 (AINPS). A helical transmembrane segment spans residues 113–133 (ILPTAFMGTAMIFTCFTLSAL). The Cytoplasmic segment spans residues 134–139 (YARRRS). The chain crosses the membrane as a helical span at residues 140–160 (YLFLGGILMSAMSLMVLSSLG). The Lumenal segment spans residues 161–166 (NLFFGS). A helical membrane pass occupies residues 167–187 (IWLFQANLYVGLVVMCGFVLF). Topologically, residues 188 to 206 (DTQLIIEKAENGDKDYIWH) are cytoplasmic. The helical intramembrane region spans 207 to 227 (CVDLFSDFVTLFRKLMMILAM). Over 228–237 (NEKDKKKEKK) the chain is Cytoplasmic.

The protein belongs to the BI1 family. As to quaternary structure, interacts with BCL2 and BCL2L1. Interacts with ERN1. Ubiquitinated by BFAR, leading to proteasomal degradation.

It is found in the endoplasmic reticulum membrane. Functionally, endoplasmic reticulum (ER)-resident protein that confers cellular protection as an anti-apoptotic protein by limiting multiple stress-inducing pathways surrounding the endoplasmic reticulum and mitochondria. Inhibits the activities of the key sensor for the endoplasmic reticulum unfolded protein response IRE1alpha/ERN1 both directly and by blocking BAX/BAK binding. Modulates ER calcium homeostasis by acting as a calcium-leak channel. Negatively regulates autophagy and autophagosome formation, especially during periods of nutrient deprivation, and reduces cell survival during starvation. This Sus scrofa (Pig) protein is Bax inhibitor 1 (TMBIM6).